The sequence spans 376 residues: Sulfate/thiosulfate import ATP-binding protein CysA 1 (376 aa).

The ABC transporter domain maps to 3 to 237 (IRLTNISKKF…PNSRFVFDFL (235 aa)). 35–42 (GPSGSGKT) lines the ATP pocket.

The protein belongs to the ABC transporter superfamily. Sulfate/tungstate importer (TC 3.A.1.6) family. As to quaternary structure, the complex is composed of two ATP-binding proteins (CysA), two transmembrane proteins (CysT and CysW) and a solute-binding protein (CysP).

It is found in the cell inner membrane. The catalysed reaction is sulfate(out) + ATP + H2O = sulfate(in) + ADP + phosphate + H(+). It catalyses the reaction thiosulfate(out) + ATP + H2O = thiosulfate(in) + ADP + phosphate + H(+). Part of the ABC transporter complex CysAWTP involved in sulfate/thiosulfate import. Responsible for energy coupling to the transport system. The chain is Sulfate/thiosulfate import ATP-binding protein CysA 1 from Shewanella oneidensis (strain ATCC 700550 / JCM 31522 / CIP 106686 / LMG 19005 / NCIMB 14063 / MR-1).